The primary structure comprises 100 residues: Urease subunit gamma (100 aa).

This sequence belongs to the urease gamma subunit family. As to quaternary structure, heterotrimer of UreA (gamma), UreB (beta) and UreC (alpha) subunits. Three heterotrimers associate to form the active enzyme.

The protein resides in the cytoplasm. It catalyses the reaction urea + 2 H2O + H(+) = hydrogencarbonate + 2 NH4(+). Its pathway is nitrogen metabolism; urea degradation; CO(2) and NH(3) from urea (urease route): step 1/1. This Burkholderia thailandensis (strain ATCC 700388 / DSM 13276 / CCUG 48851 / CIP 106301 / E264) protein is Urease subunit gamma.